Here is a 444-residue protein sequence, read N- to C-terminus: NEDD8-activating enzyme E1 catalytic subunit (444 aa).

54-78 (GLGCEILKDLALSGFRDLSVIDMDT) is a binding site for ATP. Cysteine 205 (glycyl thioester intermediate) is an active-site residue.

Belongs to the ubiquitin-activating E1 family. UBA3 subfamily. In terms of assembly, heterodimer of uba3 and ula1. Interacts with NEDD8 and ubc12. Interacts with but1 and but2.

It carries out the reaction ATP + [NEDD8 protein] + [E1 NEDD8-activating enzyme]-L-cysteine = AMP + diphosphate + [E1 NEDD8-activating enzyme]-S-[NEDD8 protein]-yl-L-cysteine.. Its pathway is protein modification; protein neddylation. Functionally, catalytic subunit of the dimeric uba3-ula1 E1 enzyme. E1 activates NEDD8/ubl1 by first adenylating its C-terminal glycine residue with ATP, thereafter linking this residue to the side chain of the catalytic cysteine, yielding a NEDD8-uba3 thioester and free AMP. E1 finally transfers NEDD8 to the catalytic cysteine of ubc12. In Schizosaccharomyces pombe (strain 972 / ATCC 24843) (Fission yeast), this protein is NEDD8-activating enzyme E1 catalytic subunit (uba3).